A 125-amino-acid chain; its full sequence is Large ribosomal subunit protein bL12 (125 aa).

The protein belongs to the bacterial ribosomal protein bL12 family. Homodimer. Part of the ribosomal stalk of the 50S ribosomal subunit. Forms a multimeric L10(L12)X complex, where L10 forms an elongated spine to which 2 to 4 L12 dimers bind in a sequential fashion. Binds GTP-bound translation factors.

Its function is as follows. Forms part of the ribosomal stalk which helps the ribosome interact with GTP-bound translation factors. Is thus essential for accurate translation. This is Large ribosomal subunit protein bL12 from Rhizobium johnstonii (strain DSM 114642 / LMG 32736 / 3841) (Rhizobium leguminosarum bv. viciae).